The primary structure comprises 331 residues: Olfactory receptor 10S1 (331 aa).

The Extracellular portion of the chain corresponds to 1–38 (MTSRSVCEKMTMTTENPNQTVVSHFFLEGLRYTAKHSS). N18 is a glycosylation site (N-linked (GlcNAc...) asparagine). Residues 39–59 (LFFLLFLLIYSITVAGNLLIL) form a helical membrane-spanning segment. Residues 60-67 (LTVGSDSH) are Cytoplasmic-facing. A helical membrane pass occupies residues 68-88 (LSLPMYHFLGHLSFLDACLST). Residues 89–113 (VTVPKVMAGLLTLDGKVISFEGCAV) lie on the Extracellular side of the membrane. Residues C111 and C203 are joined by a disulfide bond. The helical transmembrane segment at 114 to 134 (QLYCFHFLASTECFLYTVMAY) threads the bilayer. The Cytoplasmic portion of the chain corresponds to 135 to 153 (DRYLAICQPLHYPVAMNRR). A helical membrane pass occupies residues 154 to 174 (MCAEMAGITWAIGATHAAIHT). Over 175-211 (SLTFRLLYCGPCHIAYFFCDIPPVLKLACTDTTINEL) the chain is Extracellular. A helical transmembrane segment spans residues 212-231 (VMLASIGIVAAGCLILIVIS). Residues 232-251 (YIFIVAAVLRIRTAQGRQRA) are Cytoplasmic-facing. A helical membrane pass occupies residues 252–272 (FSPCTAQLTGVLLYYVPPVCI). The Extracellular segment spans residues 273–283 (YLQPRSSEAGA). A helical transmembrane segment spans residues 284 to 304 (GAPAVFYTIVTPMLNPFIYTL). Residues 305-331 (RNKEVKHALQRLLCSSFRESTAGSPPP) are Cytoplasmic-facing.

Belongs to the G-protein coupled receptor 1 family.

It localises to the cell membrane. Odorant receptor. This is Olfactory receptor 10S1 (OR10S1) from Homo sapiens (Human).